Consider the following 103-residue polypeptide: Histone H4 (103 aa).

Over residues 1–14 the composition is skewed to gly residues; that stretch reads MSGRGKGGKGLGKG. Positions 1-20 are disordered; that stretch reads MSGRGKGGKGLGKGGAKRHR. Serine 2 is subject to N-acetylserine. N6-acetyl-N6-methyllysine; alternate is present on residues lysine 6 and lysine 13. Lysine 17 carries the post-translational modification N6-acetyllysine. The DNA-binding element occupies 17 to 21; sequence KRHRK. Lysine 21 carries the post-translational modification N6-methyllysine.

This sequence belongs to the histone H4 family. The nucleosome is a histone octamer containing two molecules each of H2A, H2B, H3 and H4 assembled in one H3-H4 heterotetramer and two H2A-H2B heterodimers. The octamer wraps approximately 147 bp of DNA.

Its subcellular location is the nucleus. It localises to the chromosome. Functionally, core component of nucleosome. Nucleosomes wrap and compact DNA into chromatin, limiting DNA accessibility to the cellular machineries which require DNA as a template. Histones thereby play a central role in transcription regulation, DNA repair, DNA replication and chromosomal stability. DNA accessibility is regulated via a complex set of post-translational modifications of histones, also called histone code, and nucleosome remodeling. The chain is Histone H4 (H4DEKL) from Dendronephthya klunzingeri (Klunzinger's soft coral).